A 185-amino-acid chain; its full sequence is Photosystem I assembly protein Ycf4 (185 aa).

2 helical membrane-spanning segments follow: residues 21–43 and 68–90; these read NFFW…ISSY and FYGI…NVGS.

This sequence belongs to the Ycf4 family.

It localises to the plastid. The protein resides in the chloroplast thylakoid membrane. Functionally, seems to be required for the assembly of the photosystem I complex. In Aegilops tauschii (Tausch's goatgrass), this protein is Photosystem I assembly protein Ycf4.